A 121-amino-acid polypeptide reads, in one-letter code: Large ribosomal subunit protein uL14c (121 aa).

This sequence belongs to the universal ribosomal protein uL14 family. Part of the 50S ribosomal subunit.

It is found in the plastid. It localises to the chloroplast. Functionally, binds to 23S rRNA. The polypeptide is Large ribosomal subunit protein uL14c (Euglena gracilis).